Consider the following 303-residue polypeptide: UDP-3-O-acyl-N-acetylglucosamine deacetylase (303 aa).

Zn(2+) is bound by residues His78, His237, and Asp241. Catalysis depends on His264, which acts as the Proton donor.

It belongs to the LpxC family. Zn(2+) is required as a cofactor.

It carries out the reaction a UDP-3-O-[(3R)-3-hydroxyacyl]-N-acetyl-alpha-D-glucosamine + H2O = a UDP-3-O-[(3R)-3-hydroxyacyl]-alpha-D-glucosamine + acetate. The protein operates within glycolipid biosynthesis; lipid IV(A) biosynthesis; lipid IV(A) from (3R)-3-hydroxytetradecanoyl-[acyl-carrier-protein] and UDP-N-acetyl-alpha-D-glucosamine: step 2/6. Its function is as follows. Catalyzes the hydrolysis of UDP-3-O-myristoyl-N-acetylglucosamine to form UDP-3-O-myristoylglucosamine and acetate, the committed step in lipid A biosynthesis. The chain is UDP-3-O-acyl-N-acetylglucosamine deacetylase from Pseudomonas fluorescens (strain Pf0-1).